A 428-amino-acid polypeptide reads, in one-letter code: Adenylosuccinate synthetase (428 aa).

GTP is bound by residues 11 to 17 (GDEGKGK) and 39 to 41 (GHT). Asp12 functions as the Proton acceptor in the catalytic mechanism. Mg(2+) is bound by residues Asp12 and Gly39. IMP is bound by residues 12–15 (DEGK), 37–40 (NAGH), Thr130, Arg144, Asn226, Thr241, and Arg305. His40 serves as the catalytic Proton donor. 301–307 (VTTGRKR) lines the substrate pocket. GTP contacts are provided by residues Arg307, 333 to 335 (KLD), and 415 to 417 (GTG).

Belongs to the adenylosuccinate synthetase family. As to quaternary structure, homodimer. The cofactor is Mg(2+).

The protein localises to the cytoplasm. It carries out the reaction IMP + L-aspartate + GTP = N(6)-(1,2-dicarboxyethyl)-AMP + GDP + phosphate + 2 H(+). The protein operates within purine metabolism; AMP biosynthesis via de novo pathway; AMP from IMP: step 1/2. Functionally, plays an important role in the de novo pathway and in the salvage pathway of purine nucleotide biosynthesis. Catalyzes the first committed step in the biosynthesis of AMP from IMP. The sequence is that of Adenylosuccinate synthetase from Candida tropicalis (strain ATCC MYA-3404 / T1) (Yeast).